Consider the following 207-residue polypeptide: Small ribosomal subunit protein uS4A (207 aa).

An S4 RNA-binding domain is found at 98 to 163 (TRLDNLVYRL…SPKFKELKEN (66 aa)).

The protein belongs to the universal ribosomal protein uS4 family. Part of the 30S ribosomal subunit. Contacts protein S5. The interaction surface between S4 and S5 is involved in control of translational fidelity.

One of the primary rRNA binding proteins, it binds directly to 16S rRNA where it nucleates assembly of the body of the 30S subunit. Functionally, with S5 and S12 plays an important role in translational accuracy. The protein is Small ribosomal subunit protein uS4A of Alkaliphilus metalliredigens (strain QYMF).